A 217-amino-acid polypeptide reads, in one-letter code: MKIVGAEGQEHEEFDIPFKLWRKFAAKRRLRYQSWEEGKEVMLNKLDKDLLTDFKAFAARFSSRPRPSKIFGTSSSEAISGEGNGQSGRGAARNHPRARTRCGATSTNHGGRVVPVAVAAASPRAPKKAAEAASRVRGRRRLVTRCAGAAHTQPAAIDLDGGFGHCVQKEKEAPLSQARAPAIPRGDRGQRGRKRRCGATNGGFQQPTGANQARQGR.

Disordered stretches follow at residues 68–110 (SKIF…TNHG) and 170–217 (EKEA…RQGR). A compositionally biased stretch (polar residues) spans 202 to 217 (GGFQQPTGANQARQGR).

It belongs to the adenoviridae U exon protein family.

It localises to the host nucleus. The protein localises to the host nucleoplasm. Its subcellular location is the host nucleolus. Its function is as follows. Might play a role in viral replication since it is associated with viral replication centers. Seems to have an effect on DBP localization. In Homo sapiens (Human), this protein is U exon protein.